A 174-amino-acid chain; its full sequence is Large ribosomal subunit protein uL10 (174 aa).

It belongs to the universal ribosomal protein uL10 family. Part of the ribosomal stalk of the 50S ribosomal subunit. The N-terminus interacts with L11 and the large rRNA to form the base of the stalk. The C-terminus forms an elongated spine to which L12 dimers bind in a sequential fashion forming a multimeric L10(L12)X complex.

Functionally, forms part of the ribosomal stalk, playing a central role in the interaction of the ribosome with GTP-bound translation factors. This chain is Large ribosomal subunit protein uL10, found in Verminephrobacter eiseniae (strain EF01-2).